Reading from the N-terminus, the 214-residue chain is Guanylate kinase (214 aa).

Positions 6–192 (GTLYIISAPS…ALEDLKSIFR (187 aa)) constitute a Guanylate kinase-like domain. 13–20 (APSGAGKT) contributes to the ATP binding site.

This sequence belongs to the guanylate kinase family.

Its subcellular location is the cytoplasm. The catalysed reaction is GMP + ATP = GDP + ADP. Functionally, essential for recycling GMP and indirectly, cGMP. This chain is Guanylate kinase, found in Pseudomonas syringae pv. tomato (strain ATCC BAA-871 / DC3000).